Consider the following 873-residue polypeptide: Nonsense-mediated mRNA decay factor SMG8 (873 aa).

The interval 531 to 604 (AKKMAQREDE…ESMASKTERE (74 aa)) is disordered. The span at 540-550 (ELAEEDTDLDI) shows a compositional bias: acidic residues. 2 stretches are compositionally biased toward low complexity: residues 551 to 562 (PESLLDPDSTSP) and 574 to 583 (SSSESSSQES). The segment covering 591 to 604 (SRRDESMASKTERE) has biased composition (basic and acidic residues).

Belongs to the SMG8 family.

In terms of biological role, involved in nonsense-mediated decay (NMD) of mRNAs containing premature stop codons. Probable component of kinase complex containing smg-1 and recruited to stalled ribosomes. This chain is Nonsense-mediated mRNA decay factor SMG8 (smg-8), found in Caenorhabditis elegans.